The sequence spans 625 residues: MRVLLIHAKRFIYRTRMKAIPEAEDINGVQGEGSFENALVVFTTVESRDTSNPKEVVETAAKDIVEIASKVGAKTIVVYPYAHLSQKLAPPHQAKNILAMLELEIKKLASDKFEVSRAPFGWYKEFELHCHGHPLSELSRNYEAKTTARVEVKKKYYVLTPEGEVYSPEEFLEKASPEFRAVIEKEALGKEIGGVENPVNKLCAKFGFEWEPLSDYGHMRYEPHATLMIEAVGEYAWILARSLTIPVLKVKGTNMFDLAEKPVYEHAALFGDRLYELWADKKHLVMRYAACHQQFSMLKDYVLSYRDLPLGMFEIADSYRLEQSGEVTLCFRLRRFYMPDLHILARSVEEAVKIAEELQKIIHREAEKLGQTYYAVYNVTEDFWEEKRNLLLELVRRDGKPALITVYPAGIYYWVVNVEYHIVDSAGRPREIATFQFDVGNAKRFGIRYVDENNKEHYPVIIHTALIGSIERYIYMVFDAAVKMERRGQTPYIPTWLAPIQVRLIPVNPSSEQQLSHAEKVASLLERHLIRVDIDDRQLSLGRRIRDAAREWIPYIAVIGDREVETGTVNVTIRRTNDRVAVKPEELLEMVLKDLEGYPRVQSTLPRYVSKRPTLVYLEKEVALE.

The editing domain stretch occupies residues Met-1–Arg-149. Catalytic regions lie at residues Asn-197–Pro-494 and Pro-198–Pro-494. Cys-291, His-342, and His-463 together coordinate Zn(2+).

The protein belongs to the class-II aminoacyl-tRNA synthetase family. Homodimer. It depends on Zn(2+) as a cofactor.

The protein resides in the cytoplasm. It carries out the reaction tRNA(Thr) + L-threonine + ATP = L-threonyl-tRNA(Thr) + AMP + diphosphate + H(+). In terms of biological role, catalyzes the attachment of threonine to tRNA(Thr) in a two-step reaction: L-threonine is first activated by ATP to form Thr-AMP and then transferred to the acceptor end of tRNA(Thr). Also edits incorrectly charged L-seryl-tRNA(Thr). This is Threonine--tRNA ligase from Hyperthermus butylicus (strain DSM 5456 / JCM 9403 / PLM1-5).